Reading from the N-terminus, the 171-residue chain is Large ribosomal subunit protein bL9 (171 aa).

The protein belongs to the bacterial ribosomal protein bL9 family.

Functionally, binds to the 23S rRNA. The chain is Large ribosomal subunit protein bL9 from Rickettsia felis (strain ATCC VR-1525 / URRWXCal2) (Rickettsia azadi).